We begin with the raw amino-acid sequence, 479 residues long: (R)-1-hydroxy-2-aminoethylphosphonate ammonia-lyase (479 aa).

K317 carries the post-translational modification N6-(pyridoxal phosphate)lysine.

The protein belongs to the class-III pyridoxal-phosphate-dependent aminotransferase family. It depends on pyridoxal 5'-phosphate as a cofactor.

It catalyses the reaction (1R)-(2-amino-1-hydroxyethyl)phosphonate = phosphonoacetaldehyde + NH4(+). In terms of biological role, involved in phosphonate degradation. Functions as a lyase that catalyzes an elimination reaction on the naturally occurring compound (R)-1-hydroxy-2-aminoethylphosphonate ((R)-HAEP), releasing ammonia and generating phosphonoacetaldehyde (PAA), which can be then hydrolyzed by PhnX, encoded by an adjacent gene. Thus, catalyzes a reaction that serves to funnel (R)-HAEP into the hydrolytic pathway for aminoethylphosphonate (AEP, the most common biogenic phosphonate) degradation, expanding the scope and the usefulness of the pathway itself. Is not active toward the (S) enantiomer of HAEP or other HAEP-related compounds such as ethanolamine and D,L-isoserine, indicating a very high substrate specificity. The polypeptide is (R)-1-hydroxy-2-aminoethylphosphonate ammonia-lyase (Vibrio splendidus (strain 12B01)).